Here is a 455-residue protein sequence, read N- to C-terminus: Catalase-like protein (455 aa).

The tract at residues 1 to 25 (MSQQDKKLTGVFGHPVSDRENSMTA) is disordered.

The protein belongs to the catalase family.

Functionally, catalytically inactive. The chain is Catalase-like protein (katB) from Staphylococcus aureus.